A 147-amino-acid polypeptide reads, in one-letter code: Globin, polymeric component P2 (147 aa).

One can recognise a Globin domain in the interval 2–146; that stretch reads PLTADQVAAL…ISDALVAGLE (145 aa). Heme b is bound at residue histidine 96.

Belongs to the globin family. Polymer.

This Glycera dibranchiata (Bloodworm) protein is Globin, polymeric component P2.